A 388-amino-acid polypeptide reads, in one-letter code: Oligogalacturonide lyase (388 aa).

It localises to the periplasm. The enzyme catalyses 4-(4-deoxy-alpha-D-galact-4-enuronosyl)-D-galacturonate = 2 5-dehydro-4-deoxy-D-glucuronate. The protein operates within glycan metabolism; pectin degradation; 2-dehydro-3-deoxy-D-gluconate from pectin: step 3/5. Involved in degradation of pectin, which causes soft-rod disease in plants. In Pectobacterium atrosepticum (strain SCRI 1043 / ATCC BAA-672) (Erwinia carotovora subsp. atroseptica), this protein is Oligogalacturonide lyase (ogl).